The primary structure comprises 126 residues: Fumarate reductase subunit C (126 aa).

The next 3 membrane-spanning stretches (helical) occupy residues 30–50, 64–84, and 105–125; these read IFVAWFVLYLMLVLRAVGAGG, VVVVLNVVALSFLLLHAVTWF, and VLAGHYAAWLVVSVIVAWMVL.

Belongs to the FrdC family. In terms of assembly, part of an enzyme complex containing four subunits: a flavoprotein (FrdA), an iron-sulfur protein (FrdB), and two hydrophobic anchor proteins (FrdC and FrdD).

Its subcellular location is the cell membrane. Its function is as follows. Anchors the catalytic components of the fumarate reductase complex to the cell membrane, binds quinones. In Mycobacterium tuberculosis (strain ATCC 25177 / H37Ra), this protein is Fumarate reductase subunit C.